We begin with the raw amino-acid sequence, 252 residues long: Imidazole glycerol phosphate synthase subunit HisF (252 aa).

Active-site residues include aspartate 11 and aspartate 130.

It belongs to the HisA/HisF family. As to quaternary structure, heterodimer of HisH and HisF.

The protein localises to the cytoplasm. The enzyme catalyses 5-[(5-phospho-1-deoxy-D-ribulos-1-ylimino)methylamino]-1-(5-phospho-beta-D-ribosyl)imidazole-4-carboxamide + L-glutamine = D-erythro-1-(imidazol-4-yl)glycerol 3-phosphate + 5-amino-1-(5-phospho-beta-D-ribosyl)imidazole-4-carboxamide + L-glutamate + H(+). The protein operates within amino-acid biosynthesis; L-histidine biosynthesis; L-histidine from 5-phospho-alpha-D-ribose 1-diphosphate: step 5/9. Its function is as follows. IGPS catalyzes the conversion of PRFAR and glutamine to IGP, AICAR and glutamate. The HisF subunit catalyzes the cyclization activity that produces IGP and AICAR from PRFAR using the ammonia provided by the HisH subunit. The chain is Imidazole glycerol phosphate synthase subunit HisF from Bacillus licheniformis (strain ATCC 14580 / DSM 13 / JCM 2505 / CCUG 7422 / NBRC 12200 / NCIMB 9375 / NCTC 10341 / NRRL NRS-1264 / Gibson 46).